Consider the following 398-residue polypeptide: Dual specificity protein phosphatase 4 (398 aa).

Valine 2 is modified (N-acetylvaline). The Rhodanese domain maps to 45 to 163 (SGGKCLLLDC…FSSEYPEFCS (119 aa)). Residues 199–340 (GPVEILPFLY…LLQFESQVLT (142 aa)) enclose the Tyrosine-protein phosphatase domain. Cysteine 284 serves as the catalytic Phosphocysteine intermediate. Residues serine 390 and serine 395 each carry the phosphoserine; by MAPK modification.

Belongs to the protein-tyrosine phosphatase family. Non-receptor class dual specificity subfamily. In terms of assembly, hollow spherical complex composed of 24 subunits with pseudooctahedral symmetry, has a tetramer as the basic unit. Post-translationally, phosphorylation in the C-terminus by ERK1/2 inhibits proteasomal degradation and stabilizes the protein.

The protein resides in the nucleus. The catalysed reaction is O-phospho-L-tyrosyl-[protein] + H2O = L-tyrosyl-[protein] + phosphate. It catalyses the reaction O-phospho-L-seryl-[protein] + H2O = L-seryl-[protein] + phosphate. The enzyme catalyses O-phospho-L-threonyl-[protein] + H2O = L-threonyl-[protein] + phosphate. Its function is as follows. Regulates mitogenic signal transduction by dephosphorylating both Thr and Tyr residues on MAP kinases ERK1 and ERK2. This is Dual specificity protein phosphatase 4 (Dusp4) from Mus musculus (Mouse).